We begin with the raw amino-acid sequence, 233 residues long: Adenosine 5'-phosphosulfate reductase (233 aa).

Residues cysteine 120, cysteine 121, cysteine 203, and cysteine 206 each coordinate [4Fe-4S] cluster. Cysteine 229 serves as the catalytic Nucleophile; cysteine thiosulfonate intermediate.

This sequence belongs to the PAPS reductase family. CysH subfamily. [4Fe-4S] cluster serves as cofactor.

Its subcellular location is the cytoplasm. The enzyme catalyses [thioredoxin]-disulfide + sulfite + AMP + 2 H(+) = adenosine 5'-phosphosulfate + [thioredoxin]-dithiol. Its pathway is sulfur metabolism; hydrogen sulfide biosynthesis; sulfite from sulfate. In terms of biological role, catalyzes the formation of sulfite from adenosine 5'-phosphosulfate (APS) using thioredoxin as an electron donor. The polypeptide is Adenosine 5'-phosphosulfate reductase (Bacillus pumilus (strain SAFR-032)).